Reading from the N-terminus, the 238-residue chain is Synapse differentiation-inducing gene protein 1-like (238 aa).

3 disordered regions span residues 1-24 (MESL…GPYP), 78-111 (KVKE…PGQA), and 126-155 (EEFQ…NFLT). Over 1–162 (MESLSELQNP…FLTLPPRDHL (162 aa)) the chain is Extracellular. The segment covering 133–151 (GDPEEEESDATSTESESED) has biased composition (acidic residues). The chain crosses the membrane as a helical span at residues 163–183 (GLTIFSMLCCFWPLGIAAFYF). At 184–205 (SQGTSKAISKGDFRLANTTSRR) the chain is on the cytoplasmic side. A helical transmembrane segment spans residues 206-226 (ALFLATLSIAVGAGLYVAVVV). At 227–238 (ALAAYMSQNGHS) the chain is on the extracellular side.

The protein belongs to the CD225/Dispanin family.

It is found in the membrane. Its subcellular location is the golgi apparatus. The protein localises to the cis-Golgi network. The polypeptide is Synapse differentiation-inducing gene protein 1-like (SYNDIG1L) (Bos taurus (Bovine)).